The following is a 432-amino-acid chain: Gamma-glutamyl phosphate reductase (432 aa).

This sequence belongs to the gamma-glutamyl phosphate reductase family.

The protein localises to the cytoplasm. The catalysed reaction is L-glutamate 5-semialdehyde + phosphate + NADP(+) = L-glutamyl 5-phosphate + NADPH + H(+). It functions in the pathway amino-acid biosynthesis; L-proline biosynthesis; L-glutamate 5-semialdehyde from L-glutamate: step 2/2. In terms of biological role, catalyzes the NADPH-dependent reduction of L-glutamate 5-phosphate into L-glutamate 5-semialdehyde and phosphate. The product spontaneously undergoes cyclization to form 1-pyrroline-5-carboxylate. This Methylorubrum extorquens (strain CM4 / NCIMB 13688) (Methylobacterium extorquens) protein is Gamma-glutamyl phosphate reductase.